We begin with the raw amino-acid sequence, 158 residues long: Egg cell-secreted protein 1.1 (158 aa).

The N-terminal stretch at 1–27 (MASKSSFMATFNIVTLMLMVASSTVTA) is a signal peptide. A glycan (N-linked (GlcNAc...) asparagine) is linked at asparagine 122.

The protein belongs to the plant egg cell-secreted peptide family. As to expression, restricted to female reproductive tissues, specifically accumulating in storage vesicles of the unfertilized egg cell.

Its subcellular location is the cytoplasmic vesicle. It is found in the secreted. Functionally, involved in the regulation of gamete interactions during the double fertilization and to prevent multiple-pollen tube attraction; mediates the redistribution of the gamete fusogen HAP2/GCS1 to the cell surface after secretion upon sperm arrival. The polypeptide is Egg cell-secreted protein 1.1 (EC1.1) (Arabidopsis thaliana (Mouse-ear cress)).